We begin with the raw amino-acid sequence, 459 residues long: Argininosuccinate lyase (459 aa).

This sequence belongs to the lyase 1 family. Argininosuccinate lyase subfamily.

The protein localises to the cytoplasm. It catalyses the reaction 2-(N(omega)-L-arginino)succinate = fumarate + L-arginine. The protein operates within amino-acid biosynthesis; L-arginine biosynthesis; L-arginine from L-ornithine and carbamoyl phosphate: step 3/3. The polypeptide is Argininosuccinate lyase (Chromobacterium violaceum (strain ATCC 12472 / DSM 30191 / JCM 1249 / CCUG 213 / NBRC 12614 / NCIMB 9131 / NCTC 9757 / MK)).